We begin with the raw amino-acid sequence, 258 residues long: Methylthioribulose-1-phosphate dehydratase (258 aa).

Positions 1–20 are enriched in polar residues; the sequence is MTPPSNGQAAETNDHLVQSD. The disordered stretch occupies residues 1-21; that stretch reads MTPPSNGQAAETNDHLVQSDN. C105 provides a ligand contact to substrate. Zn(2+) is bound by residues H123 and H125. E153 functions as the Proton donor/acceptor in the catalytic mechanism. Zn(2+) is bound at residue H210.

Belongs to the aldolase class II family. MtnB subfamily. Zn(2+) serves as cofactor.

The protein resides in the cytoplasm. It catalyses the reaction 5-(methylsulfanyl)-D-ribulose 1-phosphate = 5-methylsulfanyl-2,3-dioxopentyl phosphate + H2O. The protein operates within amino-acid biosynthesis; L-methionine biosynthesis via salvage pathway; L-methionine from S-methyl-5-thio-alpha-D-ribose 1-phosphate: step 2/6. In terms of biological role, catalyzes the dehydration of methylthioribulose-1-phosphate (MTRu-1-P) into 2,3-diketo-5-methylthiopentyl-1-phosphate (DK-MTP-1-P). The protein is Methylthioribulose-1-phosphate dehydratase of Chaetomium globosum (strain ATCC 6205 / CBS 148.51 / DSM 1962 / NBRC 6347 / NRRL 1970) (Soil fungus).